Reading from the N-terminus, the 402-residue chain is MLAKMSFMQNVKNIQEVDVNHKRVLIRVDFNVPLDENLNITDDTRIRESLPTIQFCIDNKAKDIILVSHLGRPKGVEEKLSLKPFLKRLERLLNHEVVFSQNIAQLKQALNENAPTRIFLLENIRFLKGEEENDENLAKDLASLCDVFVNDAFGTSHRKHASTYGTAKFAPIKVSGFLLKKEIDSFYQAFNHPLRPLLLIVGGAKVSSKLTLLKNILDLIDKLIIAGAMSNTFLKALGYDVQDSSVEDALINDALELLQSAKEKKVKVYLPIDAVTTDDILNPKHIKISPVQDIEPKHKIADIGPASLKLFSEVIESAPTILWNGPLGVHEKQEFARGTTFLAHKIANTYAFSLIGGGDTIDAINRAGEKDNMSFISTGGGASLELLEGKILPCFEVLDKRH.

Substrate-binding positions include 29–31 (DFN), Arg45, 69–72 (HLGR), Arg125, and Arg158. ATP-binding positions include Lys209, Glu331, and 357–360 (GGDT).

It belongs to the phosphoglycerate kinase family.

The protein resides in the cytoplasm. It catalyses the reaction (2R)-3-phosphoglycerate + ATP = (2R)-3-phospho-glyceroyl phosphate + ADP. It participates in carbohydrate degradation; glycolysis; pyruvate from D-glyceraldehyde 3-phosphate: step 2/5. This is Phosphoglycerate kinase (pgk) from Helicobacter pylori (strain J99 / ATCC 700824) (Campylobacter pylori J99).